Reading from the N-terminus, the 204-residue chain is dTTP/UTP pyrophosphatase (204 aa).

Asp68 (proton acceptor) is an active-site residue.

It belongs to the Maf family. YhdE subfamily. The cofactor is a divalent metal cation.

The protein localises to the cytoplasm. It catalyses the reaction dTTP + H2O = dTMP + diphosphate + H(+). The catalysed reaction is UTP + H2O = UMP + diphosphate + H(+). Functionally, nucleoside triphosphate pyrophosphatase that hydrolyzes dTTP and UTP. May have a dual role in cell division arrest and in preventing the incorporation of modified nucleotides into cellular nucleic acids. The polypeptide is dTTP/UTP pyrophosphatase (Thermotoga maritima (strain ATCC 43589 / DSM 3109 / JCM 10099 / NBRC 100826 / MSB8)).